We begin with the raw amino-acid sequence, 93 residues long: UPF0728 protein C10orf53 (93 aa).

Belongs to the UPF0728 family.

This chain is UPF0728 protein C10orf53 (C10orf53), found in Homo sapiens (Human).